A 186-amino-acid chain; its full sequence is Photosystem I assembly protein Ycf4 (186 aa).

2 helical membrane-spanning segments follow: residues 22–42 and 57–77; these read FCWACILFLGSLGFLVVGTSS and IIFFPQGIVMSFYGIAGLFIS.

The protein belongs to the Ycf4 family.

Its subcellular location is the plastid. It localises to the chloroplast thylakoid membrane. Seems to be required for the assembly of the photosystem I complex. The sequence is that of Photosystem I assembly protein Ycf4 from Dioscorea elephantipes (Elephant's foot yam).